We begin with the raw amino-acid sequence, 148 residues long: UPF0179 protein VNG_1401C (148 aa).

This sequence belongs to the UPF0179 family.

The sequence is that of UPF0179 protein VNG_1401C from Halobacterium salinarum (strain ATCC 700922 / JCM 11081 / NRC-1) (Halobacterium halobium).